Here is a 292-residue protein sequence, read N- to C-terminus: Phosphoribosylglycinamide formyltransferase, chloroplastic (292 aa).

A chloroplast-targeting transit peptide spans 1 to 65 (MESRVLFSSQ…KAASSTPQIV (65 aa)). 88–90 (GSN) provides a ligand contact to N(1)-(5-phospho-beta-D-ribosyl)glycinamide. Residues 167-170 (LKLI) and Asn-184 each bind (6R)-10-formyltetrahydrofolate. His-186 (proton donor) is an active-site residue. Asp-227 is a binding site for (6R)-10-formyltetrahydrofolate. Glu-256 is a N(1)-(5-phospho-beta-D-ribosyl)glycinamide binding site.

This sequence belongs to the GART family.

It localises to the plastid. Its subcellular location is the chloroplast. It carries out the reaction N(1)-(5-phospho-beta-D-ribosyl)glycinamide + (6R)-10-formyltetrahydrofolate = N(2)-formyl-N(1)-(5-phospho-beta-D-ribosyl)glycinamide + (6S)-5,6,7,8-tetrahydrofolate + H(+). It participates in purine metabolism; IMP biosynthesis via de novo pathway; N(2)-formyl-N(1)-(5-phospho-D-ribosyl)glycinamide from N(1)-(5-phospho-D-ribosyl)glycinamide (10-formyl THF route): step 1/1. The protein is Phosphoribosylglycinamide formyltransferase, chloroplastic (PUR3) of Arabidopsis thaliana (Mouse-ear cress).